Here is a 1019-residue protein sequence, read N- to C-terminus: Probable LRR receptor-like serine/threonine-protein kinase At1g29720 (1019 aa).

Positions 1 to 19 (MSIILWSFFLFFTIILSSL) are cleaved as a signal peptide. At 20-615 (TNITTLASFS…EKTKHHIKYP (596 aa)) the chain is on the extracellular side. 3 N-linked (GlcNAc...) asparagine glycosylation sites follow: Asn-21, Asn-79, and Asn-90. LRR repeat units follow at residues 93–117 (ICRI…LTKL), 118–141 (PYLK…WAKM), 143–165 (YLTS…LQNF), 166–189 (KNLT…LGNL), 190–212 (TSLT…TLAR), 214–236 (VNLE…YIGN), 237–261 (WTRL…VVRL), 263–283 (NLLE…NLSS), 284–307 (KGLK…IWNL), 308–330 (TDLK…VQNP), 332–351 (KNIY…GGLL), 352–374 (NSQS…QKGS), and 375–398 (TINT…AVPA). Residues Asn-153, Asn-167, and Asn-188 are each glycosylated (N-linked (GlcNAc...) asparagine). Asn-225 and Asn-236 each carry an N-linked (GlcNAc...) asparagine glycan. N-linked (GlcNAc...) asparagine glycans are attached at residues Asn-280 and Asn-306. 4 N-linked (GlcNAc...) asparagine glycosylation sites follow: Asn-363, Asn-387, Asn-469, and Asn-558. Residues 616–636 (LILGASGALVTIVLLAVGIYA) form a helical membrane-spanning segment. Over 637–1019 (RGIYRRDNNR…STVENSSSSL (383 aa)) the chain is Cytoplasmic. Residues 673-946 (FDQANKLGEG…EAVKMLEGEI (274 aa)) form the Protein kinase domain. ATP contacts are provided by residues 679–687 (LGEGGFGSV) and Lys-701. The residue at position 746 (Tyr-746) is a Phosphotyrosine. Asp-797 (proton acceptor) is an active-site residue. Phosphoserine is present on Ser-830. 2 positions are modified to phosphothreonine: Thr-831 and Thr-836. Position 844 is a phosphotyrosine (Tyr-844).

Belongs to the protein kinase superfamily. Ser/Thr protein kinase family.

Its subcellular location is the cell membrane. The catalysed reaction is L-seryl-[protein] + ATP = O-phospho-L-seryl-[protein] + ADP + H(+). The enzyme catalyses L-threonyl-[protein] + ATP = O-phospho-L-threonyl-[protein] + ADP + H(+). The chain is Probable LRR receptor-like serine/threonine-protein kinase At1g29720 (RFK1) from Arabidopsis thaliana (Mouse-ear cress).